The chain runs to 181 residues: Large ribosomal subunit protein uL5 (181 aa).

Belongs to the universal ribosomal protein uL5 family. Part of the 50S ribosomal subunit; contacts the 5S rRNA and probably tRNA. Forms a bridge to the 30S subunit in the 70S ribosome.

Its function is as follows. This is one of the proteins that bind and probably mediate the attachment of the 5S RNA into the large ribosomal subunit, where it forms part of the central protuberance. In the 70S ribosome it contacts protein S13 of the 30S subunit (bridge B1b), connecting the 2 subunits; this bridge is implicated in subunit movement. May contact the P site tRNA; the 5S rRNA and some of its associated proteins might help stabilize positioning of ribosome-bound tRNAs. The sequence is that of Large ribosomal subunit protein uL5 from Methanococcus maripaludis (strain C5 / ATCC BAA-1333).